A 322-amino-acid chain; its full sequence is Gluconeogenesis factor (322 aa).

NAD(+) is bound by residues Thr13, 217–219, 263–267, and 300–301; these read NVM, KYAKE, and RH.

The protein belongs to the gluconeogenesis factor family.

It is found in the cytoplasm. In terms of biological role, required for morphogenesis under gluconeogenic growth conditions. This chain is Gluconeogenesis factor, found in Halalkalibacterium halodurans (strain ATCC BAA-125 / DSM 18197 / FERM 7344 / JCM 9153 / C-125) (Bacillus halodurans).